Here is a 270-residue protein sequence, read N- to C-terminus: uncharacterized protein (270 aa).

It is found in the virion. This is an uncharacterized protein from Acanthamoeba polyphaga (Amoeba).